Here is a 551-residue protein sequence, read N- to C-terminus: Cleavage and polyadenylation specificity factor subunit 6 (551 aa).

The necessary for interaction with NXF1 stretch occupies residues 1–213 (MADGVDHIDI…RGRFPGAVPG (213 aa)). Positions 81–161 (IALYIGNLTW…QNPVVTPCNK (81 aa)) constitute an RRM domain. The interval 81–161 (IALYIGNLTW…QNPVVTPCNK (81 aa)) is necessary for interaction with NUDT21/CPSF5. Positions 81 to 161 (IALYIGNLTW…QNPVVTPCNK (81 aa)) are necessary for nuclear paraspeckles localization. Residue T157 is modified to Phosphothreonine. Residues 169-180 (MQSRKTTQSGQM) are compositionally biased toward polar residues. Disordered regions lie at residues 169 to 411 (MQSR…PLSE) and 477 to 551 (LHGI…YRHR). The short motif at 202–206 (RGRGR) is the GAR element. Residues 207–219 (FPGAVPGGDRFPG) are compositionally biased toward low complexity. 3 stretches are compositionally biased toward pro residues: residues 220-265 (PAGP…PLAG), 285-366 (GQPP…PPPT), and 377-388 (GPPPTDPYGRPP). Over residues 389-404 (PYDRGDYGPPGREMDT) the composition is skewed to basic and acidic residues. Phosphothreonine occurs at positions 404 and 407. A sufficient for nuclear speckle localization region spans residues 404–551 (TARTPLSEAE…RDREREYRHR (148 aa)). The interval 405–551 (ARTPLSEAEF…RDREREYRHR (147 aa)) is necessary for RNA-binding. The necessary for interaction with SRSF3, SRSF7 and TRA2B/SFRS10 stretch occupies residues 481 to 551 (ESKSYGSGSR…RDREREYRHR (71 aa)). Residues 489–503 (SRRERSRERDHSRSR) show a composition bias toward basic and acidic residues. The interval 490–551 (RRERSRERDH…RDREREYRHR (62 aa)) is arg/Ser-rich domain. Phosphoserine occurs at positions 494, 500, 511, 513, and 525. Positions 504–514 (EKSRRHKSRSR) are enriched in basic residues. Positions 510–551 (KSRSRDRHDDYYRERSRERERHRDRDRDRDRERDREREYRHR) are sufficient for nuclear targeting. Basic and acidic residues predominate over residues 515 to 551 (DRHDDYYRERSRERERHRDRDRDRDRERDREREYRHR).

It belongs to the RRM CPSF6/7 family. Component of the cleavage factor Im (CFIm) complex which is a heterotetramer composed of two subunits of NUDT21/CPSF5 and two subunits of CPSF6 or CPSF7 or a heterodimer of CPSF6 and CPSF7. The cleavage factor Im (CFIm) complex associates with the CPSF and CSTF complexes to promote the assembly of the core mRNA 3'-processing machinery. Associates with the exon junction complex (EJC). Associates with the 80S ribosome particle. Interacts (via the RRM domain) with NUDT21/CPSF5; this interaction is direct and enhances binding to RNA. Interacts (via Arg/Ser-rich domain) with FIP1L1 (preferentially via unphosphorylated form and Arg/Glu/Asp-rich domain); this interaction mediates, at least in part, the interaction between the CFIm and CPSF complexes and may be inhibited by CPSF6 hyper-phosphorylation. Interacts (via N-terminus) with NXF1; this interaction is direct. Interacts with SRSF3. Interacts with SRSF7. Interacts with SNRNP70. Interacts with TRA2B/SFRS10. Interacts with UPF1. Interacts with UPF3B. Interacts with VIRMA. Interacts (via Arg/Ser-rich domain) with TNPO3; promoting nuclear import of CPSF6 independently of its phosphorylation status. Interacts with YTHDC1. Phosphorylated. Phosphorylated in the Arg/Ser-rich domain by SRPK1, in vitro. Post-translationally, symmetrically dimethylated on arginine residues in the GAR motif by PRMT5 in a WDR77- and CLNS1A-dependent manner. Asymmetrically dimethylated on arginine residues in the GAR motif by PRMT1.

The protein resides in the nucleus. The protein localises to the nucleoplasm. Its subcellular location is the nucleus speckle. It is found in the cytoplasm. Functionally, component of the cleavage factor Im (CFIm) complex that functions as an activator of the pre-mRNA 3'-end cleavage and polyadenylation processing required for the maturation of pre-mRNA into functional mRNAs. CFIm contributes to the recruitment of multiprotein complexes on specific sequences on the pre-mRNA 3'-end, so called cleavage and polyadenylation signals (pA signals). Most pre-mRNAs contain multiple pA signals, resulting in alternative cleavage and polyadenylation (APA) producing mRNAs with variable 3'-end formation. The CFIm complex acts as a key regulator of cleavage and polyadenylation site choice during APA through its binding to 5'-UGUA-3' elements localized in the 3'-untranslated region (UTR) for a huge number of pre-mRNAs. CPSF6 enhances NUDT21/CPSF5 binding to 5'-UGUA-3' elements localized upstream of pA signals and promotes RNA looping, and hence activates directly the mRNA 3'-processing machinery. Plays a role in mRNA export. The polypeptide is Cleavage and polyadenylation specificity factor subunit 6 (Bos taurus (Bovine)).